Here is a 352-residue protein sequence, read N- to C-terminus: uncharacterized protein (352 aa).

The protein to M.pneumoniae MPN_633 (in the N-terminal section), and M.pneumoniae MPN_634 (in the C-terminal section).

This is an uncharacterized protein from Mycoplasma pneumoniae (strain ATCC 29342 / M129 / Subtype 1) (Mycoplasmoides pneumoniae).